Here is a 330-residue protein sequence, read N- to C-terminus: tRNA-modifying protein YgfZ (330 aa).

Folate-binding residues include Trp28 and Trp190.

The protein belongs to the tRNA-modifying YgfZ family.

It is found in the cytoplasm. In terms of biological role, folate-binding protein involved in regulating the level of ATP-DnaA and in the modification of some tRNAs. It is probably a key factor in regulatory networks that act via tRNA modification, such as initiation of chromosomal replication. The protein is tRNA-modifying protein YgfZ of Yersinia enterocolitica serotype O:8 / biotype 1B (strain NCTC 13174 / 8081).